Reading from the N-terminus, the 138-residue chain is MPPKAAEKKPSTAGKAPAGKAPEKKEAGKKTTAAGGEKKKRSKTRKETYSSYIYKVLKQVHPDTGISNRAMSILNSFVNDIFERVATEASKLAAYNKKSTISSREIQTSVRLILPGELAKHAVSEGTKAVTKYSSSAK.

Positions 1 to 10 (MPPKAAEKKP) are enriched in basic and acidic residues. The segment at 1-47 (MPPKAAEKKPSTAGKAPAGKAPEKKEAGKKTTAAGGEKKKRSKTRKE) is disordered. N6-acetyllysine; alternate is present on residues Lys8 and Lys9. Glycyl lysine isopeptide (Lys-Gly) (interchain with G-Cter in SUMO); alternate cross-links involve residues Lys8 and Lys9. Positions 11–20 (STAGKAPAGK) are enriched in low complexity. An N6-acetyllysine modification is found at Lys15. Lys24 is subject to N6-acetyllysine; alternate. Lys24 is covalently cross-linked (Glycyl lysine isopeptide (Lys-Gly) (interchain with G-Cter in SUMO); alternate). A Glycyl lysine isopeptide (Lys-Gly) (interchain with G-Cter in SUMO) cross-link involves residue Lys25. Lys132 participates in a covalent cross-link: Glycyl lysine isopeptide (Lys-Gly) (interchain with G-Cter in ubiquitin).

This sequence belongs to the histone H2B family. As to quaternary structure, the nucleosome is a histone octamer containing two molecules each of H2A, H2B, H3 and H4 assembled in one H3-H4 heterotetramer and two H2A-H2B heterodimers. The octamer wraps approximately 147 bp of DNA. Monoubiquitinated to form H2BK123ub1. H2BK123ub1 gives a specific tag for epigenetic transcriptional activation and is also prerequisite for H3K4me and H3K79me formation. H2BK123ub1 also modulates the formation of double-strand breaks during meiosis and is a prerequisite for DNA-damage checkpoint activation. Post-translationally, acetylated by GCN5 to form H2BK11ac and H2BK16ac. H2BK16ac can also be formed by ESA1. Acetylation of N-terminal lysines and particularly formation of H2BK11acK16ac has a positive effect on transcription. In terms of processing, sumoylation to form H2BK6su or H2BK7su, and probably also H2BK16su or H2BK17su, occurs preferentially near the telomeres and represses gene transcription.

The protein localises to the nucleus. It is found in the chromosome. Core component of nucleosome. Nucleosomes wrap and compact DNA into chromatin, limiting DNA accessibility to the cellular machineries which require DNA as a template. Histones thereby play a central role in transcription regulation, DNA repair, DNA replication and chromosomal stability. DNA accessibility is regulated via a complex set of post-translational modifications of histones, also called histone code, and nucleosome remodeling. The protein is Histone H2B (HTB1) of Ajellomyces capsulatus (Darling's disease fungus).